A 315-amino-acid chain; its full sequence is Acetyl-coenzyme A carboxylase carboxyl transferase subunit alpha (315 aa).

The CoA carboxyltransferase C-terminal domain occupies 39–292 (LEDKSAKLLR…GDALEQELNG (254 aa)).

This sequence belongs to the AccA family. Acetyl-CoA carboxylase is a heterohexamer composed of biotin carboxyl carrier protein (AccB), biotin carboxylase (AccC) and two subunits each of ACCase subunit alpha (AccA) and ACCase subunit beta (AccD).

The protein localises to the cytoplasm. The enzyme catalyses N(6)-carboxybiotinyl-L-lysyl-[protein] + acetyl-CoA = N(6)-biotinyl-L-lysyl-[protein] + malonyl-CoA. Its pathway is lipid metabolism; malonyl-CoA biosynthesis; malonyl-CoA from acetyl-CoA: step 1/1. Its function is as follows. Component of the acetyl coenzyme A carboxylase (ACC) complex. First, biotin carboxylase catalyzes the carboxylation of biotin on its carrier protein (BCCP) and then the CO(2) group is transferred by the carboxyltransferase to acetyl-CoA to form malonyl-CoA. This is Acetyl-coenzyme A carboxylase carboxyl transferase subunit alpha from Sphingopyxis alaskensis (strain DSM 13593 / LMG 18877 / RB2256) (Sphingomonas alaskensis).